The chain runs to 148 residues: UPF0756 membrane protein YeaL (148 aa).

Transmembrane regions (helical) follow at residues 14 to 34, 51 to 71, 86 to 106, and 121 to 141; these read ALGF…LIIV, LTVG…SGTL, LVAI…VALM, and VLGV…AGLV.

The protein belongs to the UPF0756 family.

It localises to the cell membrane. This chain is UPF0756 membrane protein YeaL, found in Salmonella arizonae (strain ATCC BAA-731 / CDC346-86 / RSK2980).